Reading from the N-terminus, the 358-residue chain is 3-isopropylmalate dehydrogenase (358 aa).

76–89 (GPRWDNLTGAERPE) lines the NAD(+) pocket. Residues arginine 96, arginine 106, arginine 135, and aspartate 225 each coordinate substrate. Residues aspartate 225, aspartate 249, and aspartate 253 each contribute to the Mg(2+) site. Residue 283-295 (GSAPDIAGQNKAN) coordinates NAD(+).

It belongs to the isocitrate and isopropylmalate dehydrogenases family. LeuB type 1 subfamily. In terms of assembly, homodimer. The cofactor is Mg(2+). It depends on Mn(2+) as a cofactor.

Its subcellular location is the cytoplasm. It catalyses the reaction (2R,3S)-3-isopropylmalate + NAD(+) = 4-methyl-2-oxopentanoate + CO2 + NADH. The protein operates within amino-acid biosynthesis; L-leucine biosynthesis; L-leucine from 3-methyl-2-oxobutanoate: step 3/4. Functionally, catalyzes the oxidation of 3-carboxy-2-hydroxy-4-methylpentanoate (3-isopropylmalate) to 3-carboxy-4-methyl-2-oxopentanoate. The product decarboxylates to 4-methyl-2 oxopentanoate. The sequence is that of 3-isopropylmalate dehydrogenase from Oleidesulfovibrio alaskensis (strain ATCC BAA-1058 / DSM 17464 / G20) (Desulfovibrio alaskensis).